We begin with the raw amino-acid sequence, 274 residues long: Large ribosomal subunit protein uL2cz/uL2cy (274 aa).

2 disordered regions span residues 1-23 (MAIHLYKTSTPSTRNGAVGSQVK) and 223-274 (MNPV…RRSK).

It belongs to the universal ribosomal protein uL2 family. As to quaternary structure, part of the 50S ribosomal subunit.

The protein localises to the plastid. The protein resides in the chloroplast. The sequence is that of Large ribosomal subunit protein uL2cz/uL2cy (rpl2-A) from Ranunculus macranthus (Large buttercup).